Here is a 388-residue protein sequence, read N- to C-terminus: 1-deoxy-D-xylulose 5-phosphate reductoisomerase (388 aa).

NADPH-binding residues include Thr-15, Gly-16, Ser-17, Ile-18, and Asn-127. Lys-128 provides a ligand contact to 1-deoxy-D-xylulose 5-phosphate. Glu-129 contributes to the NADPH binding site. Asp-153 is a Mn(2+) binding site. 1-deoxy-D-xylulose 5-phosphate-binding residues include Ser-154, Glu-155, Ser-179, and His-202. Residue Glu-155 participates in Mn(2+) binding. Gly-208 serves as a coordination point for NADPH. 4 residues coordinate 1-deoxy-D-xylulose 5-phosphate: Ser-215, Asn-220, Lys-221, and Glu-224. A Mn(2+)-binding site is contributed by Glu-224.

The protein belongs to the DXR family. The cofactor is Mg(2+). It depends on Mn(2+) as a cofactor.

The enzyme catalyses 2-C-methyl-D-erythritol 4-phosphate + NADP(+) = 1-deoxy-D-xylulose 5-phosphate + NADPH + H(+). It participates in isoprenoid biosynthesis; isopentenyl diphosphate biosynthesis via DXP pathway; isopentenyl diphosphate from 1-deoxy-D-xylulose 5-phosphate: step 1/6. Catalyzes the NADPH-dependent rearrangement and reduction of 1-deoxy-D-xylulose-5-phosphate (DXP) to 2-C-methyl-D-erythritol 4-phosphate (MEP). This is 1-deoxy-D-xylulose 5-phosphate reductoisomerase from Bacteroides fragilis (strain ATCC 25285 / DSM 2151 / CCUG 4856 / JCM 11019 / LMG 10263 / NCTC 9343 / Onslow / VPI 2553 / EN-2).